A 148-amino-acid polypeptide reads, in one-letter code: Large ribosomal subunit protein uL13 (148 aa).

The tract at residues 128 to 148 (PEHPHQAQNPQPFEINAKVEK) is disordered.

The protein belongs to the universal ribosomal protein uL13 family. Part of the 50S ribosomal subunit.

In terms of biological role, this protein is one of the early assembly proteins of the 50S ribosomal subunit, although it is not seen to bind rRNA by itself. It is important during the early stages of 50S assembly. The sequence is that of Large ribosomal subunit protein uL13 from Saccharopolyspora erythraea (strain ATCC 11635 / DSM 40517 / JCM 4748 / NBRC 13426 / NCIMB 8594 / NRRL 2338).